A 224-amino-acid polypeptide reads, in one-letter code: 2-C-methyl-D-erythritol 4-phosphate cytidylyltransferase (224 aa).

The protein belongs to the IspD/TarI cytidylyltransferase family. IspD subfamily.

It carries out the reaction 2-C-methyl-D-erythritol 4-phosphate + CTP + H(+) = 4-CDP-2-C-methyl-D-erythritol + diphosphate. It participates in isoprenoid biosynthesis; isopentenyl diphosphate biosynthesis via DXP pathway; isopentenyl diphosphate from 1-deoxy-D-xylulose 5-phosphate: step 2/6. Its function is as follows. Catalyzes the formation of 4-diphosphocytidyl-2-C-methyl-D-erythritol from CTP and 2-C-methyl-D-erythritol 4-phosphate (MEP). This is 2-C-methyl-D-erythritol 4-phosphate cytidylyltransferase from Saccharopolyspora erythraea (strain ATCC 11635 / DSM 40517 / JCM 4748 / NBRC 13426 / NCIMB 8594 / NRRL 2338).